Reading from the N-terminus, the 288-residue chain is Store-operated calcium entry regulator STIMATE (288 aa).

Over 1–28 the chain is Cytoplasmic; that stretch reads MQGPGGNVSRGLPGGPASTVASGAGRCE. The next 3 membrane-spanning stretches (helical) occupy residues 29–49, 69–89, and 102–122; these read SGALMHSFGIFLQGLLGVVAF, IWFLDTSKQAIGMLFIHFANV, and LYLINFLLDATVGMLLIYVGV. The GXXXG motif signature appears at 149–153; sequence GAWVG. 2 helical membrane passes run 156–176 and 194–214; these read ALYIVIMIFEKSVVFIVLLIL and LAIVMLIVPFFVNAFMFWVVD. At 215–288 the chain is on the cytoplasmic side; sequence NFLMRKGKTK…KKKHRFGLPV (74 aa). A disordered region spans residues 228-288; that stretch reads EERGANQDSR…KKKHRFGLPV (61 aa). The segment at 241-246 is required for localization in the endoplasmic reticulum; sequence KVRYRR. The span at 261–272 shows a compositional bias: acidic residues; that stretch reads ADDEMEESDAEE. The span at 277-288 shows a compositional bias: basic residues; that stretch reads PVKKKHRFGLPV.

Belongs to the STIMATE family. In terms of assembly, homooligomer. Interacts with STIM1.

It localises to the endoplasmic reticulum membrane. In terms of biological role, acts as a regulator of store-operated Ca(2+) entry (SOCE) at junctional sites that connect the endoplasmic reticulum (ER) and plasma membrane (PM), called ER-plasma membrane (ER-PM) junction or cortical ER. SOCE is a Ca(2+) influx following depletion of intracellular Ca(2+) stores. Acts by interacting with STIM1, promoting STIM1 conformational switch. Involved in STIM1 relocalization to ER-PM junctions. Contributes to the maintenance and reorganization of store-dependent ER-PM junctions. In Rattus norvegicus (Rat), this protein is Store-operated calcium entry regulator STIMATE.